The chain runs to 338 residues: Ornithine carbamoyltransferase (338 aa).

Carbamoyl phosphate-binding positions include 56–59 (STRT), Arg-107, and 134–137 (HPTQ). Residues Asn-168, Asp-232, and 236–237 (SM) each bind L-ornithine. Carbamoyl phosphate contacts are provided by residues 274-275 (CL) and Arg-320.

Belongs to the aspartate/ornithine carbamoyltransferase superfamily. OTCase family.

Its subcellular location is the cytoplasm. It carries out the reaction carbamoyl phosphate + L-ornithine = L-citrulline + phosphate + H(+). It functions in the pathway amino-acid degradation; L-arginine degradation via ADI pathway; carbamoyl phosphate from L-arginine: step 2/2. In terms of biological role, reversibly catalyzes the transfer of the carbamoyl group from carbamoyl phosphate (CP) to the N(epsilon) atom of ornithine (ORN) to produce L-citrulline. In Buchnera aphidicola subsp. Acyrthosiphon pisum (strain 5A), this protein is Ornithine carbamoyltransferase.